The sequence spans 196 residues: 3-isopropylmalate dehydratase small subunit (196 aa).

This sequence belongs to the LeuD family. LeuD type 1 subfamily. As to quaternary structure, heterodimer of LeuC and LeuD.

It catalyses the reaction (2R,3S)-3-isopropylmalate = (2S)-2-isopropylmalate. It functions in the pathway amino-acid biosynthesis; L-leucine biosynthesis; L-leucine from 3-methyl-2-oxobutanoate: step 2/4. Its function is as follows. Catalyzes the isomerization between 2-isopropylmalate and 3-isopropylmalate, via the formation of 2-isopropylmaleate. This is 3-isopropylmalate dehydratase small subunit from Streptococcus sanguinis (strain SK36).